A 433-amino-acid chain; its full sequence is MTQMDEAKKGVITDEMKAVAEAENVTPEFVRRGVASGKIAIPSNLNREEVAAVGIGAGLRTKVNATIGTSTDIVDFDMEEEKARIAIENRADTLMELSVGGDLDEIRRRILDLSPIPVGSVPVYQAAIETIREKGASIYMDEDVMFRAIEKQAKDGIDFMAIHCSVNRETLRRLKRQGREGGLVSRGGAFVSAWMVENGLENPLYENFDYILEIAKEHDFVLSMANAMRAGAIADSTDRAQVQELIVLGELIDRAREAGVQTIVEGPGHIPLNEIKANVILQKKLCRGAPFYMLGPIVTDIGAGYDHIVSSIGAAASAAAGADFICYVTPAEHLALPYPDDVKEGVIATRIGAYVGDMVKGIHNGEKDLEMANARKKLNWEAQFDAAMCPAEARRIRDERPPEDPDTCTMCGEYCAVKIVNEWLDSADTRIFD.

Residues Met-95, Tyr-124, His-163, 185-187, 226-229, and Glu-265 contribute to the substrate site; these read SRG and NAMR. His-269 provides a ligand contact to Zn(2+). Tyr-292 provides a ligand contact to substrate. Zn(2+) is bound at residue His-333. Positions 408, 411, and 415 each coordinate [4Fe-4S] cluster.

The protein belongs to the ThiC family. Requires [4Fe-4S] cluster as cofactor.

The catalysed reaction is 5-amino-1-(5-phospho-beta-D-ribosyl)imidazole + S-adenosyl-L-methionine = 4-amino-2-methyl-5-(phosphooxymethyl)pyrimidine + CO + 5'-deoxyadenosine + formate + L-methionine + 3 H(+). Its pathway is cofactor biosynthesis; thiamine diphosphate biosynthesis. Catalyzes the synthesis of the hydroxymethylpyrimidine phosphate (HMP-P) moiety of thiamine from aminoimidazole ribotide (AIR) in a radical S-adenosyl-L-methionine (SAM)-dependent reaction. This Methanothermobacter thermautotrophicus (strain ATCC 29096 / DSM 1053 / JCM 10044 / NBRC 100330 / Delta H) (Methanobacterium thermoautotrophicum) protein is Phosphomethylpyrimidine synthase 1.